Here is an 89-residue protein sequence, read N- to C-terminus: Large ribosomal subunit protein bL31B (89 aa).

The disordered stretch occupies residues 70-89; the sequence is RVQRFESRRRRRQQQSGEQG.

The protein belongs to the bacterial ribosomal protein bL31 family. Type B subfamily. Part of the 50S ribosomal subunit.

This chain is Large ribosomal subunit protein bL31B, found in Rubrobacter xylanophilus (strain DSM 9941 / JCM 11954 / NBRC 16129 / PRD-1).